The chain runs to 410 residues: Beta-arrestin-1 (410 aa).

The interval 1 to 163 (MGDKGTRVFK…LEEKIHKRNS (163 aa)) is interaction with SRC. Positions 45–86 (PEYLKERRVYVTLTCAFRYGREDLDVLGLTFRKDLFVANVQS) are interaction with CHRM2. Y47 is modified (phosphotyrosine). Positions 250, 255, 324, and 326 each coordinate 1D-myo-inositol hexakisphosphate. Residues 318–410 (IVSYKVKVKL…GTGSPQLNNR (93 aa)) are interaction with TRAF6. The [DE]-X(1,2)-F-X-X-[FL]-X-X-X-R motif motif lies at 385 to 395 (RQRLKGMKDDK). Positions 389-410 (KGMKDDKEEEENGTGSPQLNNR) are disordered. Polar residues predominate over residues 401-410 (GTGSPQLNNR). A Phosphoserine; by GRK5 modification is found at S404.

The protein belongs to the arrestin family. Monomer. Homodimer. Homooligomer; the self-association is mediated by InsP6-binding. Heterooligomer with ARRB2; the association is mediated by InsP6-binding. Interacts with ADRB2 (phosphorylated). Interacts with CHRM2 (phosphorylated). Interacts with LHCGR. Interacts with CYTH2 and CASR. Interacts with AP2B1 (dephosphorylated); phosphorylation of AP2B1 disrupts the interaction. Interacts (dephosphorylated at Ser-404) with CLTC. Interacts with CCR2 and GRK2. Interacts with CRR5. Interacts with PTAFR (phosphorylated on serine residues). Interacts with CLTC and MAP2K3. Interacts with CREB1. Interacts with TRAF6. Interacts with IGF1R and MDM2. Interacts with C5AR1. Interacts with PDE4D. Interacts with SRC (via the SH3 domain and the protein kinase domain); the interaction is independent of the phosphorylation state of SRC C-terminus. Interacts with TACR1. Interacts with RAF1. Interacts with CHUK, IKBKB and MAP3K14. Interacts with DVL1; the interaction is enhanced by phosphorylation of DVL1. Interacts with DVL2; the interaction is enhanced by phosphorylation of DVL2. Interacts with IGF1R. Associates with MAP kinase p38. Part of a MAPK signaling complex consisting of TACR1, ARRB1, SRC, MAPK1 (activated) and MAPK3 (activated). Part of a MAPK signaling complex consisting of F2RL1, ARRB1, RAF1, MAPK1 (activated) and MAPK3 (activated). Interacts with GPR143. Interacts with MAP2K4/MKK4. Interacts with HCK and CXCR1 (phosphorylated). Interacts with ACKR3 and ACKR4. Interacts with ARRDC1; the interaction is direct. Interacts with GPR61, GPR62 and GPR135. Post-translationally, constitutively phosphorylated at in the cytoplasm. At the plasma membrane, is rapidly dephosphorylated, a process that is required for clathrin binding and ADRB2 endocytosis but not for ADRB2 binding and desensitization. Once internalized, is rephosphorylated. In terms of processing, the ubiquitination status appears to regulate the formation and trafficking of beta-arrestin-GPCR complexes and signaling. Ubiquitination appears to occur GPCR-specific. Ubiquitinated by MDM2; the ubiquitination is required for rapid internalization of ADRB2. Deubiquitinated by USP33; the deubiquitination leads to a dissociation of the beta-arrestin-GPCR complex. Stimulation of a class A GPCR, such as ADRB2, induces transient ubiquitination and subsequently promotes association with USP33.

It localises to the cytoplasm. It is found in the nucleus. The protein resides in the cell membrane. Its subcellular location is the membrane. The protein localises to the clathrin-coated pit. It localises to the cell projection. It is found in the pseudopodium. The protein resides in the cytoplasmic vesicle. Functionally, functions in regulating agonist-mediated G-protein coupled receptor (GPCR) signaling by mediating both receptor desensitization and resensitization processes. During homologous desensitization, beta-arrestins bind to the GPRK-phosphorylated receptor and sterically preclude its coupling to the cognate G-protein; the binding appears to require additional receptor determinants exposed only in the active receptor conformation. The beta-arrestins target many receptors for internalization by acting as endocytic adapters (CLASPs, clathrin-associated sorting proteins) and recruiting the GPRCs to the adapter protein 2 complex 2 (AP-2) in clathrin-coated pits (CCPs). However, the extent of beta-arrestin involvement appears to vary significantly depending on the receptor, agonist and cell type. Internalized arrestin-receptor complexes traffic to intracellular endosomes, where they remain uncoupled from G-proteins. Two different modes of arrestin-mediated internalization occur. Class A receptors, like ADRB2, OPRM1, ENDRA, D1AR and ADRA1B dissociate from beta-arrestin at or near the plasma membrane and undergo rapid recycling. Class B receptors, like AVPR2, AGTR1, NTSR1, TRHR and TACR1 internalize as a complex with arrestin and traffic with it to endosomal vesicles, presumably as desensitized receptors, for extended periods of time. Receptor resensitization then requires that receptor-bound arrestin is removed so that the receptor can be dephosphorylated and returned to the plasma membrane. Involved in internalization of P2RY4 and UTP-stimulated internalization of P2RY2. Involved in phosphorylation-dependent internalization of OPRD1 ands subsequent recycling. Involved in the degradation of cAMP by recruiting cAMP phosphodiesterases to ligand-activated receptors. Beta-arrestins function as multivalent adapter proteins that can switch the GPCR from a G-protein signaling mode that transmits short-lived signals from the plasma membrane via small molecule second messengers and ion channels to a beta-arrestin signaling mode that transmits a distinct set of signals that are initiated as the receptor internalizes and transits the intracellular compartment. Acts as a signaling scaffold for MAPK pathways such as MAPK1/3 (ERK1/2). ERK1/2 activated by the beta-arrestin scaffold is largely excluded from the nucleus and confined to cytoplasmic locations such as endocytic vesicles, also called beta-arrestin signalosomes. Recruits c-Src/SRC to ADRB2 resulting in ERK activation. GPCRs for which the beta-arrestin-mediated signaling relies on both ARRB1 and ARRB2 (codependent regulation) include ADRB2, F2RL1 and PTH1R. For some GPCRs the beta-arrestin-mediated signaling relies on either ARRB1 or ARRB2 and is inhibited by the other respective beta-arrestin form (reciprocal regulation). Inhibits ERK1/2 signaling in AGTR1- and AVPR2-mediated activation (reciprocal regulation). Is required for SP-stimulated endocytosis of NK1R and recruits c-Src/SRC to internalized NK1R resulting in ERK1/2 activation, which is required for the antiapoptotic effects of SP. Is involved in proteinase-activated F2RL1-mediated ERK activity. Acts as a signaling scaffold for the AKT1 pathway. Is involved in alpha-thrombin-stimulated AKT1 signaling. Is involved in IGF1-stimulated AKT1 signaling leading to increased protection from apoptosis. Involved in activation of the p38 MAPK signaling pathway and in actin bundle formation. Involved in F2RL1-mediated cytoskeletal rearrangement and chemotaxis. Involved in AGTR1-mediated stress fiber formation by acting together with GNAQ to activate RHOA. Appears to function as signaling scaffold involved in regulation of MIP-1-beta-stimulated CCR5-dependent chemotaxis. Involved in attenuation of NF-kappa-B-dependent transcription in response to GPCR or cytokine stimulation by interacting with and stabilizing CHUK. May serve as nuclear messenger for GPCRs. Involved in OPRD1-stimulated transcriptional regulation by translocating to CDKN1B and FOS promoter regions and recruiting EP300 resulting in acetylation of histone H4. Involved in regulation of LEF1 transcriptional activity via interaction with DVL1 and/or DVL2 Also involved in regulation of receptors other than GPCRs. Involved in Toll-like receptor and IL-1 receptor signaling through the interaction with TRAF6 which prevents TRAF6 autoubiquitination and oligomerization required for activation of NF-kappa-B and JUN. Involved in IL8-mediated granule release in neutrophils. Binds phosphoinositides. Binds inositolhexakisphosphate (InsP6). Required for atypical chemokine receptor ACKR2-induced RAC1-LIMK1-PAK1-dependent phosphorylation of cofilin (CFL1) and for the up-regulation of ACKR2 from endosomal compartment to cell membrane, increasing its efficiency in chemokine uptake and degradation. Involved in the internalization of the atypical chemokine receptor ACKR3. Negatively regulates the NOTCH signaling pathway by mediating the ubiquitination and degradation of NOTCH1 by ITCH. Participates in the recruitment of the ubiquitin-protein ligase to the receptor. The protein is Beta-arrestin-1 (ARRB1) of Macaca fascicularis (Crab-eating macaque).